The primary structure comprises 513 residues: Glutamyl-tRNA(Gln) amidotransferase subunit A (513 aa).

Active-site charge relay system residues include K85 and S160. The Acyl-ester intermediate role is filled by S184.

The protein belongs to the amidase family. GatA subfamily. As to quaternary structure, heterotrimer of A, B and C subunits.

It catalyses the reaction L-glutamyl-tRNA(Gln) + L-glutamine + ATP + H2O = L-glutaminyl-tRNA(Gln) + L-glutamate + ADP + phosphate + H(+). Its function is as follows. Allows the formation of correctly charged Gln-tRNA(Gln) through the transamidation of misacylated Glu-tRNA(Gln) in organisms which lack glutaminyl-tRNA synthetase. The reaction takes place in the presence of glutamine and ATP through an activated gamma-phospho-Glu-tRNA(Gln). In Bifidobacterium longum (strain NCC 2705), this protein is Glutamyl-tRNA(Gln) amidotransferase subunit A.